The chain runs to 343 residues: MSIATIPVSSLRRAPAPTTAPQAPLRWQVEDIAALYELPFMDLLFRAQQVHREHFDANEVQLSTLLSIKTGGCAEDCGYCPQSTHFETEVKASKLMPLAEVIEAARAAKDQGATRFCMGAAWRSPKERDMERVTEIVREVRSLGLETCMTLGMLQAEQAQALKDAGLDYYNHNLDSAPEFYGDIISTRTYQDRLDTLGHVRQAGINVCCGGIVGMGESRLQRAGLIAQLANLSPYPESVPINNLVPVAGTPLANTAPLDPFEFVRTIAVARITMPLTMVRLSAGREQMDEALQALCFAAGANSIFYGDKLLTTSNPQADRDRQLFERLGLKTQGARPAAQQAQ.

The Radical SAM core domain maps to 58–285 (NEVQLSTLLS…LTMVRLSAGR (228 aa)). Cysteine 73, cysteine 77, and cysteine 80 together coordinate [4Fe-4S] cluster. The [2Fe-2S] cluster site is built by cysteine 117, cysteine 148, cysteine 208, and arginine 280.

The protein belongs to the radical SAM superfamily. Biotin synthase family. As to quaternary structure, homodimer. [4Fe-4S] cluster is required as a cofactor. The cofactor is [2Fe-2S] cluster.

The catalysed reaction is (4R,5S)-dethiobiotin + (sulfur carrier)-SH + 2 reduced [2Fe-2S]-[ferredoxin] + 2 S-adenosyl-L-methionine = (sulfur carrier)-H + biotin + 2 5'-deoxyadenosine + 2 L-methionine + 2 oxidized [2Fe-2S]-[ferredoxin]. Its pathway is cofactor biosynthesis; biotin biosynthesis; biotin from 7,8-diaminononanoate: step 2/2. Functionally, catalyzes the conversion of dethiobiotin (DTB) to biotin by the insertion of a sulfur atom into dethiobiotin via a radical-based mechanism. The polypeptide is Biotin synthase 2 (Polaromonas sp. (strain JS666 / ATCC BAA-500)).